Consider the following 833-residue polypeptide: Leucine--tRNA ligase (833 aa).

The short motif at 41-52 is the 'HIGH' region element; sequence PYPSGAGLHVGH. A 'KMSKS' region motif is present at residues 610 to 614; sequence KMSKS. Residue lysine 613 participates in ATP binding.

Belongs to the class-I aminoacyl-tRNA synthetase family.

The protein localises to the cytoplasm. The enzyme catalyses tRNA(Leu) + L-leucine + ATP = L-leucyl-tRNA(Leu) + AMP + diphosphate. The protein is Leucine--tRNA ligase of Streptococcus pyogenes serotype M28 (strain MGAS6180).